We begin with the raw amino-acid sequence, 317 residues long: Transaldolase (317 aa).

The active-site Schiff-base intermediate with substrate is the Lys132.

This sequence belongs to the transaldolase family. Type 1 subfamily. As to quaternary structure, homodimer.

It is found in the cytoplasm. It catalyses the reaction D-sedoheptulose 7-phosphate + D-glyceraldehyde 3-phosphate = D-erythrose 4-phosphate + beta-D-fructose 6-phosphate. It functions in the pathway carbohydrate degradation; pentose phosphate pathway; D-glyceraldehyde 3-phosphate and beta-D-fructose 6-phosphate from D-ribose 5-phosphate and D-xylulose 5-phosphate (non-oxidative stage): step 2/3. Transaldolase is important for the balance of metabolites in the pentose-phosphate pathway. This chain is Transaldolase, found in Actinobacillus succinogenes (strain ATCC 55618 / DSM 22257 / CCUG 43843 / 130Z).